The chain runs to 270 residues: ATP synthase subunit a 1 (270 aa).

The next 5 helical transmembrane spans lie at V38–Y58, I98–V118, D143–I163, L208–W228, and A239–V259.

It belongs to the ATPase A chain family. F-type ATPases have 2 components, CF(1) - the catalytic core - and CF(0) - the membrane proton channel. CF(1) has five subunits: alpha(3), beta(3), gamma(1), delta(1), epsilon(1). CF(0) has three main subunits: a(1), b(2) and c(9-12). The alpha and beta chains form an alternating ring which encloses part of the gamma chain. CF(1) is attached to CF(0) by a central stalk formed by the gamma and epsilon chains, while a peripheral stalk is formed by the delta and b chains.

The protein resides in the cell inner membrane. Key component of the proton channel; it plays a direct role in the translocation of protons across the membrane. The chain is ATP synthase subunit a 1 from Vibrio campbellii (strain ATCC BAA-1116).